Reading from the N-terminus, the 195-residue chain is N-(5'-phosphoribosyl)anthranilate isomerase (195 aa).

It belongs to the TrpF family.

The catalysed reaction is N-(5-phospho-beta-D-ribosyl)anthranilate = 1-(2-carboxyphenylamino)-1-deoxy-D-ribulose 5-phosphate. The protein operates within amino-acid biosynthesis; L-tryptophan biosynthesis; L-tryptophan from chorismate: step 3/5. This Methanoregula boonei (strain DSM 21154 / JCM 14090 / 6A8) protein is N-(5'-phosphoribosyl)anthranilate isomerase.